We begin with the raw amino-acid sequence, 384 residues long: N-acetyldiaminopimelate deacetylase (384 aa).

Aspartate 74 is a catalytic residue. Glutamate 133 serves as the catalytic Proton acceptor.

The protein belongs to the peptidase M20A family. N-acetyldiaminopimelate deacetylase subfamily.

The catalysed reaction is N-acetyl-(2S,6S)-2,6-diaminopimelate + H2O = (2S,6S)-2,6-diaminopimelate + acetate. It functions in the pathway amino-acid biosynthesis; L-lysine biosynthesis via DAP pathway; LL-2,6-diaminopimelate from (S)-tetrahydrodipicolinate (acetylase route): step 3/3. Catalyzes the conversion of N-acetyl-diaminopimelate to diaminopimelate and acetate. In Pediococcus pentosaceus (strain ATCC 25745 / CCUG 21536 / LMG 10740 / 183-1w), this protein is N-acetyldiaminopimelate deacetylase.